The chain runs to 89 residues: Large ribosomal subunit protein bL27 (89 aa).

The tract at residues Met-1–Gly-26 is disordered. Positions Asn-12–Gly-26 are enriched in basic and acidic residues.

The protein belongs to the bacterial ribosomal protein bL27 family.

The polypeptide is Large ribosomal subunit protein bL27 (Desulforamulus reducens (strain ATCC BAA-1160 / DSM 100696 / MI-1) (Desulfotomaculum reducens)).